A 128-amino-acid chain; its full sequence is Ribonuclease P protein component (128 aa).

Belongs to the RnpA family. In terms of assembly, consists of a catalytic RNA component (M1 or rnpB) and a protein subunit.

It carries out the reaction Endonucleolytic cleavage of RNA, removing 5'-extranucleotides from tRNA precursor.. Functionally, RNaseP catalyzes the removal of the 5'-leader sequence from pre-tRNA to produce the mature 5'-terminus. It can also cleave other RNA substrates such as 4.5S RNA. The protein component plays an auxiliary but essential role in vivo by binding to the 5'-leader sequence and broadening the substrate specificity of the ribozyme. In Synechococcus sp. (strain CC9902), this protein is Ribonuclease P protein component.